Reading from the N-terminus, the 344-residue chain is uncharacterized protein (344 aa).

The next 6 membrane-spanning stretches (helical) occupy residues 155-175 (IARI…IFLV), 181-201 (WGLG…AYGW), 221-241 (LSFI…VNGF), 254-274 (ISSF…FALL), 291-311 (FTII…AAYV), and 319-339 (ALQN…IGVF).

This sequence to M.jannaschii MJ1032.

It is found in the cell membrane. This is an uncharacterized protein from Archaeoglobus fulgidus (strain ATCC 49558 / DSM 4304 / JCM 9628 / NBRC 100126 / VC-16).